A 313-amino-acid chain; its full sequence is tRNA uridine(34) hydroxylase (313 aa).

One can recognise a Rhodanese domain in the interval 124–218 (SDPEVLLIDT…YLEEVPQEET (95 aa)). Catalysis depends on Cys-178, which acts as the Cysteine persulfide intermediate.

The protein belongs to the TrhO family.

It carries out the reaction uridine(34) in tRNA + AH2 + O2 = 5-hydroxyuridine(34) in tRNA + A + H2O. Functionally, catalyzes oxygen-dependent 5-hydroxyuridine (ho5U) modification at position 34 in tRNAs. This is tRNA uridine(34) hydroxylase from Pseudomonas fluorescens (strain SBW25).